Consider the following 338-residue polypeptide: Methionine import ATP-binding protein MetN 2 (338 aa).

The ABC transporter domain occupies 2-242; the sequence is IEIEKVCVDF…PQHAFTQQLV (241 aa). An ATP-binding site is contributed by 39–46; sequence GTSGAGKS.

It belongs to the ABC transporter superfamily. Methionine importer (TC 3.A.1.24) family. As to quaternary structure, the complex is composed of two ATP-binding proteins (MetN), two transmembrane proteins (MetI) and a solute-binding protein (MetQ).

The protein localises to the cell inner membrane. It carries out the reaction L-methionine(out) + ATP + H2O = L-methionine(in) + ADP + phosphate + H(+). The enzyme catalyses D-methionine(out) + ATP + H2O = D-methionine(in) + ADP + phosphate + H(+). Its function is as follows. Part of the ABC transporter complex MetNIQ involved in methionine import. Responsible for energy coupling to the transport system. This is Methionine import ATP-binding protein MetN 2 from Salmonella typhimurium (strain LT2 / SGSC1412 / ATCC 700720).